Consider the following 418-residue polypeptide: Zinc metalloproteinase-disintegrin-like batroxstatin-2 (418 aa).

Positions 10-206 constitute a Peptidase M12B domain; it reads KYVKLVLVAD…DMPQCILEKP (197 aa). 3 cysteine pairs are disulfide-bonded: Cys-121/Cys-201, Cys-161/Cys-185, and Cys-163/Cys-168. His-146 is a Zn(2+) binding site. Glu-147 is an active-site residue. Residues His-150 and His-156 each coordinate Zn(2+). In terms of domain architecture, Disintegrin spans 214 to 299; that stretch reads PPVCGNYFVE…AECTDRFQRN (86 aa). 6 residues coordinate Ca(2+): Val-216, Asn-219, Phe-221, Glu-223, Glu-226, and Asp-229. 14 disulfides stabilise this stretch: Cys-217–Cys-246, Cys-228–Cys-241, Cys-230–Cys-236, Cys-240–Cys-263, Cys-254–Cys-260, Cys-259–Cys-285, Cys-272–Cys-292, Cys-279–Cys-310, Cys-303–Cys-315, Cys-322–Cys-372, Cys-337–Cys-383, Cys-350–Cys-360, Cys-367–Cys-409, and Cys-403–Cys-414. The short motif at 278-280 is the D/ECD-tripeptide element; it reads ECD. The Ca(2+) site is built by Asp-280, Met-281, Asp-283, Asp-294, and Arg-295. N-linked (GlcNAc...) asparagine glycosylation is present at Asn-312.

It belongs to the venom metalloproteinase (M12B) family. P-III subfamily. P-IIIc sub-subfamily. In terms of assembly, homodimer; disulfide-linked. Zn(2+) is required as a cofactor. As to expression, expressed by the venom gland.

The protein localises to the secreted. Functionally, snake venom zinc metalloprotease that induces apoptosis in vascular endothelial cells (VEC), without degrading the extracellular matrix (it cannot cleave collagen) or inhibiting adhesion of VEC. Has also fibrinogenolytic and hemorrhagic activities. This is Zinc metalloproteinase-disintegrin-like batroxstatin-2 from Bothrops atrox (Barba amarilla).